Consider the following 579-residue polypeptide: Folliculin (579 aa).

Positions 32–52 (GASCGDSIGQGEQAEDEEMGI) are disordered. Residues 86–242 (RSLAAGHPGY…RNGNAARSLT (157 aa)) enclose the uDENN FLCN/SMCR8-type domain. Positions 337–491 (NMVQRRMGVF…ILNKIEAALS (155 aa)) constitute a cDENN FLCN/SMCR8-type domain. The 66-residue stretch at 493 to 558 (ENLSMDVVDQ…LLKFWMTGLS (66 aa)) folds into the dDENN FLCN/SMCR8-type domain.

This sequence belongs to the folliculin family. As to quaternary structure, component of the lysosomal folliculin complex (LFC).

The protein resides in the lysosome membrane. Its subcellular location is the cytoplasm. The protein localises to the cytosol. It is found in the cell projection. It localises to the cilium. The protein resides in the cytoskeleton. Its subcellular location is the microtubule organizing center. The protein localises to the centrosome. It is found in the spindle. It localises to the nucleus. Its activity is regulated as follows. GTPase-activating activity is inhibited in the folliculin complex (LFC), which stabilizes the GDP-bound state of RagA/RRAGA (or RagB/RRAGB), because Arg-164 is located far from the RagC/RRAGC or RagD/RRAGD nucleotide pocket. Disassembly of the LFC complex upon amino acid restimulation liberates the GTPase-activating activity. Its function is as follows. Multi-functional protein, involved in both the cellular response to amino acid availability and in the regulation of glycolysis. GTPase-activating protein that plays a key role in the cellular response to amino acid availability through regulation of the non-canonical mTORC1 signaling cascade controlling the MiT/TFE factors tfeb and tfe3. Activates mTORC1 by acting as a GTPase-activating protein: specifically stimulates GTP hydrolysis by RagC/RRAGC or RagD/RRAGD, promoting the conversion to the GDP-bound state of RagC/RRAGC or RagD/RRAGD, and thereby activating the kinase activity of mTORC1. The GTPase-activating activity is inhibited during starvation and activated in presence of nutrients. Acts as a key component for non-canonical mTORC1-dependent control of the MiT/TFE factors tfeb and tfe3, while it is not involved in mTORC1-dependent phosphorylation of canonical RPS6KB1/S6K1 and EIF4EBP1/4E-BP1. In low-amino acid conditions, the lysosomal folliculin complex (LFC) is formed on the membrane of lysosomes, which inhibits the GTPase-activating activity of flcn, inactivates mTORC1 and maximizes nuclear translocation of tfeb and tfe3. Upon amino acid restimulation, RagA/RRAGA (or RagB/RRAGB) nucleotide exchange promotes disassembly of the LFC complex and liberates the GTPase-activating activity of flcn, leading to activation of mTORC1 and subsequent cytoplasmic retention of tfeb and tfe3. Required for the exit of hematopoietic stem cell from pluripotency by promoting mTOR-dependent cytoplasmic retention of tfe3, thereby increasing Wnt signaling. Acts as an inhibitor of browning of adipose tissue by regulating mTOR-dependent cytoplasmic retention of tfe3. In response to flow stress, regulates STK11/LKB1 accumulation and mTORC1 activation through primary cilia. Required for starvation-induced perinuclear clustering of lysosomes by promoting association of rilp with its effector rab34. Involved in the control of embryonic stem cells differentiation; together with lamtor1 it is necessary to recruit and activate RagC/RRAGC and RagD/RRAGD at the lysosomes, and to induce exit of embryonic stem cells from pluripotency via non-canonical, mTOR-independent tfe3 inactivation. Regulates glycolysis by binding to lactate dehydrogenase ldha, acting as an uncompetitive inhibitor. This chain is Folliculin, found in Xenopus tropicalis (Western clawed frog).